Consider the following 136-residue polypeptide: Histone H3 (136 aa).

Positions 1 to 43 are disordered; it reads MARTKQTARKSTGAKAPRKQLASKAARKSAPATGGIKKPHRFR. Residues K5 and K10 each carry the N6,N6,N6-trimethyllysine; alternate modification. K5 bears the N6,N6-dimethyllysine; alternate mark. N6-acetyllysine; alternate is present on residues K5 and K10. N6-methyllysine; alternate is present on K5. S11 carries the post-translational modification Phosphoserine. Residues K15, K19, and K24 each carry the N6-acetyllysine modification. K28 and K37 each carry N6,N6,N6-trimethyllysine; alternate. An N6,N6-dimethyllysine; alternate mark is found at K28 and K37. K28, K37, and K57 each carry N6-acetyllysine; alternate. Residues K28, K37, and K57 each carry the N6-methyllysine; alternate modification. N6-methyllysine is present on K80.

Belongs to the histone H3 family. As to quaternary structure, the nucleosome is a histone octamer containing two molecules each of H2A, H2B, H3 and H4 assembled in one H3-H4 heterotetramer and two H2A-H2B heterodimers. The octamer wraps approximately 147 bp of DNA. Post-translationally, phosphorylated to form H3S10ph. H3S10ph promotes subsequent H3K14ac formation by GCN5. H3S10ph is only found in the mitotically dividing MIC, but not in the amitotically dividing MAC. H3S10ph is correlated with chromosome condensation during mitotic or meiotic micronuclear divisions. Acetylation of histone H3 leads to transcriptional activation. H3K14ac formation by GCN5 is promoted by H3S10ph. H3K9acK14ac is the preferred acetylated form of newly synthesized H3. Acetylation occurs almost exclusively in the MAC. In terms of processing, methylated to form H3K4me. H3K4me is only found in the transcriptionally active MAC. Methylated to form H3K9me in developing MACs during conjugation, when genome-wide DNA elimination occurs. At this stage, H3K9me specifically occurs on DNA sequences being eliminated (IES), probably targeted by small scan RNAs (scnRNAs) bound to IES, and is required for efficient IES elimination. H3K9me is required for the interaction with the chromodomains of PDD1 and PDD3. Post-translationally, the full-length protein H3S (slow migrating) is converted to H3F (fast migrating) by proteolytic removal of the first 6 residues. H3F is unique to MIC, and processing seems to occur regularly each generation at a specific point in the cell cycle.

It is found in the nucleus. It localises to the chromosome. Functionally, core component of nucleosome. Nucleosomes wrap and compact DNA into chromatin, limiting DNA accessibility to the cellular machineries which require DNA as a template. Histones thereby play a central role in transcription regulation, DNA repair, DNA replication and chromosomal stability. DNA accessibility is regulated via a complex set of post-translational modifications of histones, also called histone code, and nucleosome remodeling. In Tetrahymena pyriformis, this protein is Histone H3.